The following is a 109-amino-acid chain: MNIEERINIINFDKGNGLIPAVIQDYKSKEVLMLGYMSKESLKKTLEGDTTWFYSRSRRKLWNKGSTSGHFQYIKEIKIDCDNDTILISVNQKGAACHTGNKSCFYRDL.

D80 is a Mg(2+) binding site. C81 lines the Zn(2+) pocket. D82 and D84 together coordinate Mg(2+). Zn(2+) contacts are provided by C97 and C104.

It belongs to the PRA-CH family. Homodimer. Requires Mg(2+) as cofactor. The cofactor is Zn(2+).

The protein localises to the cytoplasm. The catalysed reaction is 1-(5-phospho-beta-D-ribosyl)-5'-AMP + H2O = 1-(5-phospho-beta-D-ribosyl)-5-[(5-phospho-beta-D-ribosylamino)methylideneamino]imidazole-4-carboxamide. Its pathway is amino-acid biosynthesis; L-histidine biosynthesis; L-histidine from 5-phospho-alpha-D-ribose 1-diphosphate: step 3/9. Functionally, catalyzes the hydrolysis of the adenine ring of phosphoribosyl-AMP. This is Phosphoribosyl-AMP cyclohydrolase from Clostridium botulinum (strain Alaska E43 / Type E3).